Consider the following 201-residue polypeptide: 3-isopropylmalate dehydratase small subunit (201 aa).

The protein belongs to the LeuD family. LeuD type 1 subfamily. Heterodimer of LeuC and LeuD.

The enzyme catalyses (2R,3S)-3-isopropylmalate = (2S)-2-isopropylmalate. It functions in the pathway amino-acid biosynthesis; L-leucine biosynthesis; L-leucine from 3-methyl-2-oxobutanoate: step 2/4. Catalyzes the isomerization between 2-isopropylmalate and 3-isopropylmalate, via the formation of 2-isopropylmaleate. This Shewanella woodyi (strain ATCC 51908 / MS32) protein is 3-isopropylmalate dehydratase small subunit.